The chain runs to 431 residues: Histidinol dehydrogenase (431 aa).

NAD(+) is bound by residues tyrosine 127, glutamine 189, and asparagine 212. 3 residues coordinate substrate: serine 237, glutamine 259, and histidine 262. Residues glutamine 259 and histidine 262 each contribute to the Zn(2+) site. Residues glutamate 326 and histidine 327 each act as proton acceptor in the active site. Substrate contacts are provided by histidine 327, aspartate 360, glutamate 414, and histidine 419. Position 360 (aspartate 360) interacts with Zn(2+). Histidine 419 provides a ligand contact to Zn(2+).

The protein belongs to the histidinol dehydrogenase family. The cofactor is Zn(2+).

The enzyme catalyses L-histidinol + 2 NAD(+) + H2O = L-histidine + 2 NADH + 3 H(+). It functions in the pathway amino-acid biosynthesis; L-histidine biosynthesis; L-histidine from 5-phospho-alpha-D-ribose 1-diphosphate: step 9/9. Functionally, catalyzes the sequential NAD-dependent oxidations of L-histidinol to L-histidinaldehyde and then to L-histidine. This Xanthomonas campestris pv. campestris (strain ATCC 33913 / DSM 3586 / NCPPB 528 / LMG 568 / P 25) protein is Histidinol dehydrogenase.